The following is a 306-amino-acid chain: tRNA-cytidine(32) 2-sulfurtransferase (306 aa).

The tract at residues 1-25 (MSAVISLPDPQPRAARDPRVAEREQ) is disordered. The span at 14–25 (AARDPRVAEREQ) shows a compositional bias: basic and acidic residues. Positions 57 to 62 (SGGKDS) match the PP-loop motif motif. The [4Fe-4S] cluster site is built by Cys-132, Cys-135, and Cys-223. The tract at residues 286–306 (AHAWLAGSPADADADPETPTV) is disordered. Residues 297–306 (ADADPETPTV) show a composition bias toward acidic residues.

This sequence belongs to the TtcA family. As to quaternary structure, homodimer. Mg(2+) serves as cofactor. [4Fe-4S] cluster is required as a cofactor.

The protein resides in the cytoplasm. It carries out the reaction cytidine(32) in tRNA + S-sulfanyl-L-cysteinyl-[cysteine desulfurase] + AH2 + ATP = 2-thiocytidine(32) in tRNA + L-cysteinyl-[cysteine desulfurase] + A + AMP + diphosphate + H(+). It participates in tRNA modification. Catalyzes the ATP-dependent 2-thiolation of cytidine in position 32 of tRNA, to form 2-thiocytidine (s(2)C32). The sulfur atoms are provided by the cysteine/cysteine desulfurase (IscS) system. The sequence is that of tRNA-cytidine(32) 2-sulfurtransferase from Stenotrophomonas maltophilia (strain K279a).